The chain runs to 424 residues: Chloroquine resistance transporter (424 aa).

At 1–58 (MKFASKKNNQKNSSKNDERYRELDNLVQEGNGSRLGGGSCLGKCAHVFKLIFKEIKDN) the chain is on the cytoplasmic side. A helical membrane pass occupies residues 59 to 79 (IFIYILSIIYLSVCVMNKIFA). Residues 80-90 (KRTLNKIGNYS) are Vacuolar-facing. An N-linked (GlcNAc...) asparagine glycan is attached at asparagine 88. Residues 91–111 (FVTSETHNFICMIMFFIVYSL) traverse the membrane as a helical segment. Residues 112–127 (FGNKKGNSKERHRSFN) are Cytoplasmic-facing. A helical membrane pass occupies residues 128 to 148 (LQFFAISMLDACSVILAFIGL). Topologically, residues 149-154 (TRTTGN) are vacuolar. The chain crosses the membrane as a helical span at residues 155 to 175 (IQSFVLQLSIPINMFFCFLIL). Residues 176–178 (RYR) are Cytoplasmic-facing. Residues 179–199 (YHLYNYLGAVIIVVTIALVEM) traverse the membrane as a helical segment. Residues 200–209 (KLSFETQEEN) lie on the Vacuolar side of the membrane. The chain crosses the membrane as a helical span at residues 210–230 (SIIFNLVLISALIPVCFSNMT). Over 231–248 (REIVFKKYKIDILRLNAM) the chain is Cytoplasmic. Residues 249–269 (VSFFQLFTSCLILPVYTLPFL) traverse the membrane as a helical segment. The Vacuolar portion of the chain corresponds to 270–317 (KQLHLPYNEIWTNIKNGFACLFLGRNTVVENCGLGMAKLCDDCDGAWK). Intrachain disulfides connect cysteine 289-cysteine 312 and cysteine 301-cysteine 309. Residues 318-338 (TFALFSFFNICDNLITSYIID) traverse the membrane as a helical segment. The Cytoplasmic portion of the chain corresponds to 339–346 (KFSTMTYT). A helical membrane pass occupies residues 347–367 (IVSCIQGPAIAIAYYFKFLAG). The Vacuolar portion of the chain corresponds to 368–377 (DVVREPRLLD). A helical transmembrane segment spans residues 378–398 (FVTLFGYLFGSIIYRVGNIIL). The Cytoplasmic portion of the chain corresponds to 399–424 (ERKKMRNEENEDSEGELTNVDSIITQ).

The protein belongs to the CRT-like transporter family. As to quaternary structure, monomer.

The protein localises to the vacuole membrane. It catalyses the reaction L-arginine(in) = L-arginine(out). The enzyme catalyses L-lysine(in) = L-lysine(out). It carries out the reaction L-histidine(out) = L-histidine(in). The catalysed reaction is histamine(out) = histamine(in). It catalyses the reaction spermidine(in) = spermidine(out). The enzyme catalyses Fe(3+)(in) = Fe(3+)(out). It carries out the reaction Fe(2+)(in) = Fe(2+)(out). Its activity is regulated as follows. Transporter activity is trans-stimulated by host-derived peptides containing 4-11 amino acids. Trans-stimulation by hemoglobin-derived peptide VDPVNF is pH-dependent and sodium-independent. Saquinavir trans-stimulates transport of hemoglobin-derived peptide VDPVNF. Protons are non-competitive inhibitors of chloroquine transport. Functionally, nutrient transporter. Substrate transport is pH-dependent. Can transport arginine, lysine, histidine, peptides, histamine and spermidine. May modulate activity of endogenous transporters. Involved in maintaining the osmotic homeostasis of the digestive vacuole. Required for the asexual intraerythrocytic proliferation of parasites. Can transport Fe(2+) and Fe(3+). This is Chloroquine resistance transporter from Plasmodium falciparum.